A 325-amino-acid polypeptide reads, in one-letter code: NADH-quinone oxidoreductase subunit H (325 aa).

8 consecutive transmembrane segments (helical) span residues 11 to 31 (ILIS…CGAF), 81 to 101 (VIFT…FAIV), 114 to 134 (IGIL…LFAG), 149 to 169 (ASAQ…GVVA), 186 to 206 (MWNV…GVAV), 237 to 257 (FFVG…TLFF), 265 to 285 (LPPF…FILI), and 304 to 324 (VCLP…LYNA).

This sequence belongs to the complex I subunit 1 family. In terms of assembly, NDH-1 is composed of 13 different subunits. Subunits NuoA, H, J, K, L, M, N constitute the membrane sector of the complex.

The protein localises to the cell inner membrane. It catalyses the reaction a quinone + NADH + 5 H(+)(in) = a quinol + NAD(+) + 4 H(+)(out). Its function is as follows. NDH-1 shuttles electrons from NADH, via FMN and iron-sulfur (Fe-S) centers, to quinones in the respiratory chain. The immediate electron acceptor for the enzyme in this species is believed to be ubiquinone. Couples the redox reaction to proton translocation (for every two electrons transferred, four hydrogen ions are translocated across the cytoplasmic membrane), and thus conserves the redox energy in a proton gradient. This subunit may bind ubiquinone. This chain is NADH-quinone oxidoreductase subunit H, found in Serratia proteamaculans (strain 568).